The sequence spans 404 residues: Sorting nexin-5 (404 aa).

Residue alanine 2 is modified to N-acetylalanine. The 148-residue stretch at 25–172 folds into the PX domain; sequence LNVDPSLQID…HVFLEYDQDL (148 aa). Residues 40–46, 99–105, and 113–116 contribute to the a 1,2-diacyl-sn-glycero-3-phospho-(1D-myo-inositol-4,5-bisphosphate) site; these read SERDKVK, FDGPREK, and EGSM. Residues 169–261 form an interaction with DOCK1 region; that stretch reads DQDLSVRRKN…HSLALEEPTV (93 aa). Positions 183 to 200 are membrane-binding amphipathic helix; sequence FGGFFKSVVKSADEVLFS. The residue at position 193 (serine 193) is a Phosphoserine. One can recognise a BAR domain in the interval 202-404; it reads VKEVDDFFEQ…QSCIDLFKNN (203 aa). Lysine 275 bears the N6-acetyllysine mark.

It belongs to the sorting nexin family. As to quaternary structure, forms heterodimers with BAR domain-containing sorting nexins SNX1 and SNX2; does not homodimerize. The heterodimers are proposed to self-assemble into helical arrays on the membrane to stabilize and expand local membrane curvature underlying endosomal tubule formation. Thought to be a component of the originally described retromer complex (also called SNX-BAR retromer) which is a pentamer containing the heterotrimeric retromer cargo-selective complex (CSC), also described as vacuolar protein sorting subcomplex (VPS), and a heterodimeric membrane-deforming subcomplex formed between SNX1 or SNX2 and SNX5 or SNX6 (also called SNX-BAR subcomplex); the respective CSC and SNX-BAR subcomplexes associate with low affinity. Interacts with SNX1, SNX2, VPS26A, VPS29, VPS35, DCTN1, DOCK1, MIB1, PIP5K1C. Interacts with HGS; increased by PIP5K1C kinase activity and by PtdIns(3P) and/or PtdIns(3,4)P2.

It is found in the endosome. Its subcellular location is the early endosome. The protein localises to the early endosome membrane. The protein resides in the cell membrane. It localises to the cytoplasmic vesicle membrane. It is found in the cytoplasm. Its subcellular location is the cell projection. The protein localises to the phagocytic cup. The protein resides in the ruffle. Functionally, involved in several stages of intracellular trafficking. Interacts with membranes containing phosphatidylinositol lipids. Acts in part as component of the retromer membrane-deforming SNX-BAR subcomplex. The SNX-BAR retromer mediates retrograde transport of cargo proteins from endosomes to the trans-Golgi network (TGN) and is involved in endosome-to-plasma membrane transport for cargo protein recycling. The SNX-BAR subcomplex functions to deform the donor membrane into a tubular profile called endosome-to-TGN transport carrier (ETC). Does not have in vitro vesicle-to-membrane remodeling activity. Involved in retrograde transport of lysosomal enzyme receptor IGF2R. May function as link between endosomal transport vesicles and dynactin. Plays a role in the internalization of EGFR after EGF stimulation. Involved in EGFR endosomal sorting and degradation; the function involves PIP5K1C and is retromer-independent. Together with PIP5K1C facilitates HGS interaction with ubiquitinated EGFR, which initiates EGFR sorting to intraluminal vesicles (ILVs) of the multivesicular body for subsequent lysosomal degradation. Involved in E-cadherin sorting and degradation; inhibits PIP5K1C-mediated E-cadherin degradation. Plays a role in macropinocytosis. This chain is Sorting nexin-5 (SNX5), found in Bos taurus (Bovine).